Reading from the N-terminus, the 82-residue chain is RNA-binding protein Hfq (82 aa).

Residues 10–70 (DLFLNTVRKS…ISTIMPSQPV (61 aa)) form the Sm domain.

The protein belongs to the Hfq family. In terms of assembly, homohexamer.

Functionally, RNA chaperone that binds small regulatory RNA (sRNAs) and mRNAs to facilitate mRNA translational regulation in response to envelope stress, environmental stress and changes in metabolite concentrations. Also binds with high specificity to tRNAs. This is RNA-binding protein Hfq from Chelativorans sp. (strain BNC1).